The primary structure comprises 123 residues: NHL-repeat-containing protein 4 (123 aa).

NHL repeat units lie at residues 35-78 and 79-119; these read QPLG…FPRA and GPPI…YQGL.

The polypeptide is NHL-repeat-containing protein 4 (NHLRC4) (Homo sapiens (Human)).